Reading from the N-terminus, the 473-residue chain is Serine incorporator 3 (473 aa).

At 1–96 (MGAVLGVFSL…KDCDVLVGYK (96 aa)) the chain is on the extracellular side. Asparagine 34 carries N-linked (GlcNAc...) asparagine glycosylation. Residues 97–117 (AVYRISFAMAIFFFVFSLLMF) traverse the membrane as a helical segment. The Cytoplasmic segment spans residues 118–132 (KVKTSKDLRAAVHNG). A helical transmembrane segment spans residues 133 to 153 (FWFFKIAALIGIMVGSFYIPG). Residues 154 to 159 (GYFSSV) lie on the Extracellular side of the membrane. The chain crosses the membrane as a helical span at residues 160–180 (WFVVGMIGAALFILIQLVLLV). At 181 to 203 (DFAHSWNESWVNRMEEGNPRLWY) the chain is on the cytoplasmic side. A helical membrane pass occupies residues 204–224 (AALLSFTSAFYILSIICVGLL). Over 225 to 239 (YTYYTKPDGCTENKF) the chain is Extracellular. The chain crosses the membrane as a helical span at residues 240-260 (FISINLILCVVASIISIHPKI). The Cytoplasmic portion of the chain corresponds to 261–329 (QEHQPRSGLL…VPTPTPPSKS (69 aa)). The chain crosses the membrane as a helical span at residues 330-350 (GSLLDSDNFIGLFVFVLCLLY). At 351-406 (SSIRTSTNSQVDKLTLSGSDSVILGDTTTSGASDEEDGQPRRAVDNEKEGVQYSYS) the chain is on the extracellular side. Phosphoserine is present on serine 371. A helical transmembrane segment spans residues 407 to 427 (LFHLMLCLASLYIMMTLTSWY). Residues 428-446 (SPDAKFQSMTSKWPAVWVK) are Cytoplasmic-facing. Residues 447–467 (ISSSWVCLLLYVWTLVAPLVL) form a helical membrane-spanning segment. At 468–473 (TSRDFS) the chain is on the extracellular side.

This sequence belongs to the TDE1 family. Post-translationally, N-glycosylated. Ubiquitous. Expression levels were increased fourfold to tenfold in lung tumor tissues compared with normal pulmonary tissues.

It is found in the cell membrane. Its subcellular location is the golgi apparatus membrane. The protein resides in the cytoplasm. It localises to the perinuclear region. It carries out the reaction a 1,2-diacyl-sn-glycero-3-phospho-L-serine(in) = a 1,2-diacyl-sn-glycero-3-phospho-L-serine(out). The enzyme catalyses a 1,2-diacyl-sn-glycero-3-phosphocholine(in) = a 1,2-diacyl-sn-glycero-3-phosphocholine(out). It catalyses the reaction a 1,2-diacyl-sn-glycero-3-phosphoethanolamine(in) = a 1,2-diacyl-sn-glycero-3-phosphoethanolamine(out). Restriction factor required to restrict infectivity of lentiviruses, such as HIV-1: acts by inhibiting an early step of viral infection. Impairs the penetration of the viral particle into the cytoplasm. Non-ATP-dependent, non-specific lipid transporter for phosphatidylserine, phosphatidylcholine, and phosphatidylethanolamine. Functions as a scramblase that flips lipids in both directions across the membrane. Phospholipid scrambling results in HIV-1 surface exposure of phosphatidylserine and loss of membrane asymmetry, which leads to changes in HIV-1 Env conformation and loss of infectivity. The polypeptide is Serine incorporator 3 (Homo sapiens (Human)).